Consider the following 106-residue polypeptide: Small ribosomal subunit protein mS33 (106 aa).

An N-acetylserine modification is found at serine 2. The span at leucine 85–proline 94 shows a compositional bias: basic residues. The segment at leucine 85–lysine 106 is disordered. Residues arginine 95–lysine 106 are compositionally biased toward basic and acidic residues.

The protein belongs to the mitochondrion-specific ribosomal protein mS33 family. Component of the mitochondrial ribosome small subunit (28S) which comprises a 12S rRNA and about 30 distinct proteins.

It is found in the mitochondrion. The sequence is that of Small ribosomal subunit protein mS33 from Bos taurus (Bovine).